Reading from the N-terminus, the 63-residue chain is Large ribosomal subunit protein bL28 (63 aa).

Residues 1–20 form a disordered region; that stretch reads MSKRCAITGKGPMVGNNVSH.

This sequence belongs to the bacterial ribosomal protein bL28 family.

The polypeptide is Large ribosomal subunit protein bL28 (Campylobacter concisus (strain 13826)).